A 157-amino-acid chain; its full sequence is Phosphopantetheine adenylyltransferase (157 aa).

Thr8 contacts substrate. ATP-binding positions include 8–9 and His16; that span reads TF. Residues Lys40, Thr72, and Arg86 each contribute to the substrate site. ATP contacts are provided by residues 87–89, Glu97, and 122–128; these read GLR and YSFLSSS.

It belongs to the bacterial CoaD family. Homohexamer. Mg(2+) is required as a cofactor.

It is found in the cytoplasm. The catalysed reaction is (R)-4'-phosphopantetheine + ATP + H(+) = 3'-dephospho-CoA + diphosphate. It functions in the pathway cofactor biosynthesis; coenzyme A biosynthesis; CoA from (R)-pantothenate: step 4/5. Functionally, reversibly transfers an adenylyl group from ATP to 4'-phosphopantetheine, yielding dephospho-CoA (dPCoA) and pyrophosphate. This is Phosphopantetheine adenylyltransferase from Prochlorococcus marinus (strain MIT 9301).